Reading from the N-terminus, the 168-residue chain is Chorismate pyruvate-lyase (168 aa).

Substrate is bound by residues M36, R78, L116, and E157.

The protein belongs to the UbiC family. In terms of assembly, monomer.

Its subcellular location is the cytoplasm. The enzyme catalyses chorismate = 4-hydroxybenzoate + pyruvate. It functions in the pathway cofactor biosynthesis; ubiquinone biosynthesis. Its function is as follows. Removes the pyruvyl group from chorismate, with concomitant aromatization of the ring, to provide 4-hydroxybenzoate (4HB) for the ubiquinone pathway. This chain is Chorismate pyruvate-lyase, found in Photorhabdus laumondii subsp. laumondii (strain DSM 15139 / CIP 105565 / TT01) (Photorhabdus luminescens subsp. laumondii).